A 168-amino-acid chain; its full sequence is Probable chorismate pyruvate-lyase (168 aa).

3 residues coordinate substrate: arginine 75, isoleucine 114, and glutamate 155.

This sequence belongs to the UbiC family.

Its subcellular location is the cytoplasm. The catalysed reaction is chorismate = 4-hydroxybenzoate + pyruvate. Its pathway is cofactor biosynthesis; ubiquinone biosynthesis. Removes the pyruvyl group from chorismate, with concomitant aromatization of the ring, to provide 4-hydroxybenzoate (4HB) for the ubiquinone pathway. The chain is Probable chorismate pyruvate-lyase from Psychrobacter cryohalolentis (strain ATCC BAA-1226 / DSM 17306 / VKM B-2378 / K5).